The primary structure comprises 1511 residues: DNA-directed RNA polymerase subunit beta' (1511 aa).

Zn(2+) is bound by residues Cys-75, Cys-77, Cys-90, and Cys-93. Mg(2+) is bound by residues Asp-474, Asp-476, and Asp-478. The Zn(2+) site is built by Cys-804, Cys-878, Cys-885, and Cys-888.

This sequence belongs to the RNA polymerase beta' chain family. In terms of assembly, the RNAP catalytic core consists of 2 alpha, 1 beta, 1 beta' and 1 omega subunit. When a sigma factor is associated with the core the holoenzyme is formed, which can initiate transcription. Requires Mg(2+) as cofactor. Zn(2+) serves as cofactor.

It carries out the reaction RNA(n) + a ribonucleoside 5'-triphosphate = RNA(n+1) + diphosphate. In terms of biological role, DNA-dependent RNA polymerase catalyzes the transcription of DNA into RNA using the four ribonucleoside triphosphates as substrates. The polypeptide is DNA-directed RNA polymerase subunit beta' (Aliarcobacter butzleri (strain RM4018) (Arcobacter butzleri)).